A 167-amino-acid chain; its full sequence is Probable D-lyxose ketol-isomerase (167 aa).

Positions 69, 71, 82, and 137 each coordinate Mn(2+).

Belongs to the D-lyxose ketol-isomerase family. In terms of assembly, homodimer. Requires Mn(2+) as cofactor.

It catalyses the reaction D-lyxose = D-xylulose. Its function is as follows. Sugar isomerase that catalyzes the reversible isomerization of D-lyxose to D-xylulose. This Bacillus subtilis (strain 168) protein is Probable D-lyxose ketol-isomerase (ydaE).